Consider the following 772-residue polypeptide: Chondroitin sulfate glucuronyltransferase (772 aa).

At methionine 1–leucine 6 the chain is on the cytoplasmic side. Residues leucine 7–leucine 29 traverse the membrane as a helical; Signal-anchor for type II membrane protein segment. Over arginine 30–threonine 772 the chain is Lumenal. Residues asparagine 121 and asparagine 342 are each glycosylated (N-linked (GlcNAc...) asparagine). Residues alanine 629 to glycine 662 are disordered. Pro residues predominate over residues arginine 634 to alanine 652.

Belongs to the chondroitin N-acetylgalactosaminyltransferase family. In terms of tissue distribution, ubiquitous. Highly expressed in placenta, small intestine and pancreas.

The protein resides in the golgi apparatus. It is found in the golgi stack membrane. The catalysed reaction is 3-O-(beta-D-GalNAc-(1-&gt;4)-beta-D-GlcA-(1-&gt;3)-beta-D-Gal-(1-&gt;3)-beta-D-Gal-(1-&gt;4)-beta-D-Xyl)-L-seryl-[protein] + UDP-alpha-D-glucuronate = 3-O-(beta-D-GlcA-(1-&gt;3)-beta-D-GalNAc-(1-&gt;4)-beta-D-GlcA-(1-&gt;3)-beta-D-Gal-(1-&gt;3)-beta-D-Gal-(1-&gt;4)-beta-D-Xyl)-L-seryl-[protein] + UDP + H(+). The enzyme catalyses 3-O-{[beta-D-GalNAc-(1-&gt;4)-beta-D-GlcA-(1-&gt;3)](n)-beta-D-GalNAc-(1-&gt;4)-beta-D-GlcA-(1-&gt;3)-beta-D-Gal-(1-&gt;3)-beta-D-Gal-(1-&gt;4)-beta-D-Xyl}-L-seryl-[protein] + UDP-alpha-D-glucuronate = 3-O-{beta-D-GlcA-(1-&gt;3)-[beta-D-GalNAc-(1-&gt;4)-beta-D-GlcA-(1-&gt;3)](n)-beta-D-GalNAc-(1-&gt;4)-beta-D-GlcA-(1-&gt;3)-beta-D-Gal-(1-&gt;3)-beta-D-Gal-(1-&gt;4)-beta-D-Xyl}-L-seryl-[protein] + UDP + H(+). In terms of biological role, transfers glucuronic acid (GlcUA) from UDP-GlcUA to N-acetylgalactosamine residues on the non-reducing end of the elongating chondroitin polymer. Has no N-acetylgalactosaminyltransferase activity. The sequence is that of Chondroitin sulfate glucuronyltransferase (CHPF2) from Homo sapiens (Human).